The chain runs to 100 residues: MTEKPVTYQSLDMLDNILRQQTLASVSRYRSLKSTLGENEKKSVFIDDIMSSSKDIYGQDKQKLKVSETSKYFQCENCGRSIAGGRFAQHMTKCLERRRK.

The segment at 73–94 (FQCENCGRSIAGGRFAQHMTKC) adopts an SGF11-type zinc-finger fold.

This sequence belongs to the SGF11 family. In terms of assembly, component of the 1.8 MDa SAGA transcription coactivator-HAT complex. SAGA is built of 5 distinct domains with specialized functions. Within the SAGA complex, SUS1, SGF11, SGF73 and UBP8 form an additional subcomplex of SAGA called the DUB module (deubiquitination module). Interacts directly with SGF73, SUS1 and UBP8.

It localises to the nucleus. Functionally, functions as a component of the transcription regulatory histone acetylation (HAT) complex SAGA. At the promoters, SAGA is required for recruitment of the basal transcription machinery. It influences RNA polymerase II transcriptional activity through different activities such as TBP interaction and promoter selectivity, interaction with transcription activators, and chromatin modification through histone acetylation and deubiquitination. SAGA acetylates nucleosomal histone H3 to some extent (to form H3K9ac, H3K14ac, H3K18ac and H3K23ac). SAGA interacts with DNA via upstream activating sequences (UASs). Involved in transcriptional regulation of a subset of SAGA-regulated genes. Within the SAGA complex, participates in a subcomplex, that specifically deubiquitinates histones H2B. This is SAGA-associated factor 11 from Debaryomyces hansenii (strain ATCC 36239 / CBS 767 / BCRC 21394 / JCM 1990 / NBRC 0083 / IGC 2968) (Yeast).